We begin with the raw amino-acid sequence, 165 residues long: Nucleotide-binding protein LBF_1338 (165 aa).

Belongs to the YajQ family.

Its function is as follows. Nucleotide-binding protein. This chain is Nucleotide-binding protein LBF_1338, found in Leptospira biflexa serovar Patoc (strain Patoc 1 / Ames).